Here is a 245-residue protein sequence, read N- to C-terminus: MATRTQFENSNEVGVFSNLTNSYCLVAVGGSENFYSAFEAELGDVIPIVHTTIAGTRIVGRMTSGNRRGLLVPTQTTDQELMHLRNSLPDSIKIQRVEERLSALGNVICCNDYVALVHPDIERETEELIADVLGVEVFRQTIAGNVLVGSYCSLSNQGGLVHPQTSIQDQEELSSLLQVPLVAGTVNRGSSVVGAGMVVNDWLSVAGLDTTAPELSVIESIFRLQDAQPDAIGGNLRDTLIETYS.

Phosphoserine; by CK1 is present on residues serine 174 and serine 175.

Belongs to the eIF-6 family. In terms of assembly, monomer. Associates with the 60S ribosomal subunit. In terms of processing, phosphorylation at Ser-174 and Ser-175 promotes nuclear export.

The protein resides in the cytoplasm. It is found in the nucleus. It localises to the nucleolus. Its function is as follows. Binds to the 60S ribosomal subunit and prevents its association with the 40S ribosomal subunit to form the 80S initiation complex in the cytoplasm. Is also involved in ribosome biogenesis. Associates with pre-60S subunits in the nucleus and is involved in its nuclear export. The polypeptide is Eukaryotic translation initiation factor 6 (Candida albicans (strain SC5314 / ATCC MYA-2876) (Yeast)).